Reading from the N-terminus, the 912-residue chain is Phosphoenolpyruvate carboxylase (912 aa).

Catalysis depends on residues His138 and Lys575.

Belongs to the PEPCase type 1 family. Mg(2+) is required as a cofactor.

It carries out the reaction oxaloacetate + phosphate = phosphoenolpyruvate + hydrogencarbonate. In terms of biological role, forms oxaloacetate, a four-carbon dicarboxylic acid source for the tricarboxylic acid cycle. The sequence is that of Phosphoenolpyruvate carboxylase from Lactobacillus helveticus (strain DPC 4571).